Reading from the N-terminus, the 324-residue chain is Probable pectinesterase A (324 aa).

Positions 1–19 are cleaved as a signal peptide; that stretch reads MYLPSLVLGLLGFGLTAST. The N-linked (GlcNAc...) asparagine glycan is linked to asparagine 27. Glutamine 142 provides a ligand contact to substrate. Aspartate 165 serves as the catalytic Proton donor. Residue aspartate 186 is the Nucleophile of the active site. Arginine 246 and tryptophan 248 together coordinate substrate.

It belongs to the pectinesterase family.

It is found in the secreted. The enzyme catalyses [(1-&gt;4)-alpha-D-galacturonosyl methyl ester](n) + n H2O = [(1-&gt;4)-alpha-D-galacturonosyl](n) + n methanol + n H(+). The protein operates within glycan metabolism; pectin degradation; 2-dehydro-3-deoxy-D-gluconate from pectin: step 1/5. Involved in maceration and soft-rotting of plant tissue. This chain is Probable pectinesterase A (pmeA), found in Aspergillus fumigatus (strain CBS 144.89 / FGSC A1163 / CEA10) (Neosartorya fumigata).